The following is a 350-amino-acid chain: MWLGLRLFHRPFSSLAARGLVYEKHGEPLQVLRLKNVNITHPADNEVRVKMLAAPINPSDINMVQGTYALLPQLPAVGGNEGVGVVVEIGRHVSSMRPGDWVVPVDAGLGTWCTEAVFSEDSLVRVPSDIPVAGAATVSVNPCTAYRLLSDFETLRPGDTIIQNASNSGVGQAVIQIATSLGITTINVVRDREDLSSLIQRLRDLGADHVITEEQLRKPEMKDLFKNCPRPRLALNCVGGKSTTEMLRHLDYGGTMVTYGGMSKQPVTVPVSALIFKNVKLCGFWVTQWKKERAQTDREEIVKMIRDLCDLIRRGKLVPPPSTQRPLEDFSRALQDSQTPFLSRKQILIM.

The transit peptide at 1-12 directs the protein to the mitochondrion; sequence MWLGLRLFHRPF. Y68 functions as the Proton donor in the catalytic mechanism. NADP(+) contacts are provided by residues N141, 167 to 170, 190 to 192, 259 to 262, 284 to 286, and K345; these read NSGV, RDR, YGGM, and FWV.

It belongs to the zinc-containing alcohol dehydrogenase family. Quinone oxidoreductase subfamily. As to quaternary structure, homodimer. Expressed in the developing pronephros.

It localises to the mitochondrion. It carries out the reaction a 2,3-saturated acyl-[ACP] + NADP(+) = a (2E)-enoyl-[ACP] + NADPH + H(+). Its function is as follows. Catalyzes the NADPH-dependent reduction of trans-2-enoyl thioesters in mitochondrial fatty acid synthesis (fatty acid synthesis type II). Fatty acid chain elongation in mitochondria uses acyl carrier protein (ACP) as an acyl group carrier, but the enzyme accepts both ACP and CoA thioesters as substrates in vitro. May provide the octanoyl chain used for lipoic acid biosynthesis, regulating protein lipoylation and mitochondrial respiratory activity. Involved in iron homeostasis; affecting Fe-S cluster assembly and ceramide metabolism. Required for proper morphology and bioenergetic functions of mitochondria. Required for maintenance of neurons. Functions in pronephros development, regulating late differentiation of all pronephric tubule segments. This chain is Enoyl-[acyl-carrier-protein] reductase, mitochondrial (mecr), found in Xenopus tropicalis (Western clawed frog).